The primary structure comprises 451 residues: Phosphoglucosamine mutase (451 aa).

S107 (phosphoserine intermediate) is an active-site residue. Mg(2+) is bound by residues S107, D246, D248, and D250. Position 107 is a phosphoserine (S107).

Belongs to the phosphohexose mutase family. Mg(2+) serves as cofactor. Activated by phosphorylation.

It catalyses the reaction alpha-D-glucosamine 1-phosphate = D-glucosamine 6-phosphate. Its function is as follows. Catalyzes the conversion of glucosamine-6-phosphate to glucosamine-1-phosphate. In Burkholderia vietnamiensis (strain G4 / LMG 22486) (Burkholderia cepacia (strain R1808)), this protein is Phosphoglucosamine mutase.